The following is a 1138-amino-acid chain: Transmembrane channel-like protein 3 (1138 aa).

Low complexity predominate over residues 1–15; that stretch reads MEAAPGTAAAAAKPA. Disordered regions lie at residues 1-20 and 29-54; these read MEAA…SCKK and NIYT…DSQD. Residues 1 to 155 are Cytoplasmic-facing; the sequence is MEAAPGTAAA…VASYFIFLRW (155 aa). The helical transmembrane segment at 156 to 176 threads the bilayer; that stretch reads LFGINIVLTIMTGAFVVLPEL. Residues 177 to 202 are Extracellular-facing; it reads LAGAPFGSTVSKTIRQEDLKTAQDLD. The helical transmembrane segment at 203 to 223 threads the bilayer; that stretch reads TIWSLGGYLQYSVLFYGYYGS. At 224–233 the chain is on the cytoplasmic side; sequence DRKIGKAGYR. The chain crosses the membrane as a helical span at residues 234–254; that stretch reads LPLAYFLVGMAVFAYSFIILL. Topologically, residues 255-327 are extracellular; that stretch reads KKMAKNSRMS…KNLAVTISLR (73 aa). N-linked (GlcNAc...) asparagine glycosylation occurs at Asn272. Residues 328-348 traverse the membrane as a helical segment; that stretch reads IIANILVLLSLTGSIYIIYFV. The Cytoplasmic portion of the chain corresponds to 349 to 369; the sequence is VDRSQKLENNKRELTLWEKNE. The helical transmembrane segment at 370–390 threads the bilayer; it reads VSVVVSLITMIAPSAFELVAA. Over 391–401 the chain is Extracellular; sequence LEMYHPRTTLR. Residues 402 to 422 traverse the membrane as a helical segment; it reads FQLARVLVLYLGNLYSLIIAL. Over 423-508 the chain is Cytoplasmic; sequence LDKVNSMSVT…CWETYVGQEM (86 aa). Residues 509-529 traverse the membrane as a helical segment; the sequence is LKLSIIDMIFTVASILLIDFF. Over 530–569 the chain is Extracellular; it reads RGLCVRYLSDCWCWDLESKFPEYGEFKIAENVLHLVYNQG. Residues 570–590 traverse the membrane as a helical segment; the sequence is MIWMGAFFSPCLPAFNVLKLI. Residues 591–618 are Cytoplasmic-facing; it reads GLMYLRSWAVLTCNVPHQQVFRASRSNN. Residues 619-639 traverse the membrane as a helical segment; sequence FYLAMLLFMLFLCMLPTIFAI. At 640-676 the chain is on the extracellular side; it reads ARYKPSLSCGPFSGQEKIYDIVSETIQNDFPAWFNSV. Residues 677 to 697 traverse the membrane as a helical segment; the sequence is IAYISSPVVVLPALLLLFMLI. The Cytoplasmic portion of the chain corresponds to 698-1138; sequence YYLQSIARSL…EPNELVCSNV (441 aa). A compositionally biased stretch (polar residues) spans 753 to 763; sequence NSEGTRFQSLD. Disordered regions lie at residues 753 to 859, 973 to 1005, and 1065 to 1095; these read NSEG…RYPS, SPHP…DLRP, and PKTK…SSND. Basic and acidic residues predominate over residues 764-773; the sequence is GSDKRPDKDG. Composition is skewed to polar residues over residues 777–795 and 804–813; these read SQES…SVLN and TRIQTISQTV. Positions 828-845 are enriched in low complexity; sequence TTPTTSASLTPAPSVSSA. Residues 989-998 show a composition bias toward basic residues; sequence HYVKRSHRPR. The segment covering 1074-1095 has biased composition (low complexity); the sequence is SLTESDSVSIESSSDPQNSSND.

Belongs to the TMC family. Expressed in a range of tissues including cerebrum, cerebellum, retina, cochlea, lung, liver and heart. Also expressed in the apical, medial and basal portions of the basillar papilla.

The protein resides in the membrane. Its function is as follows. Probable component of an ion channel. The polypeptide is Transmembrane channel-like protein 3 (Gallus gallus (Chicken)).